Reading from the N-terminus, the 442-residue chain is UDP-N-acetylmuramoylalanine--D-glutamate ligase (442 aa).

115 to 121 contributes to the ATP binding site; it reads GSNGKST.

It belongs to the MurCDEF family.

The protein resides in the cytoplasm. The enzyme catalyses UDP-N-acetyl-alpha-D-muramoyl-L-alanine + D-glutamate + ATP = UDP-N-acetyl-alpha-D-muramoyl-L-alanyl-D-glutamate + ADP + phosphate + H(+). Its pathway is cell wall biogenesis; peptidoglycan biosynthesis. Cell wall formation. Catalyzes the addition of glutamate to the nucleotide precursor UDP-N-acetylmuramoyl-L-alanine (UMA). This Aliivibrio salmonicida (strain LFI1238) (Vibrio salmonicida (strain LFI1238)) protein is UDP-N-acetylmuramoylalanine--D-glutamate ligase.